The following is a 663-amino-acid chain: MSHDRSVNVSHDAVIAKPERGTMLQSFSPRSHGSKGYSLPQDSEENRGSVGQSAGQSSTSVVDQVRSPADDAGVTSSSTICPAPVCRQFWKAGSYNDELSSKSQQPNGKNYLHVHPMFLHSNATSHKWAFGAVAELLDNAVDEIQNGATFVIVDKTTNPRDGATALLIQDDGGGMDPQAMRHCMGFGFSDKKSDSAIGRYGNGFKTSTMRLGADVIVFSRHSKNQTLTQSIGLLSYTYLTRTGHDRIVVPILDYEFNASAGEFKTLQDREHFISSLSILLEWSPFSTEAELLQQFDDVGPHGTKVIIYNMWLNSDAKLELDFDSVAEDILIEGSIKKTGSKIVNDHIASRFSYSLRVYLSILYLRIPETFKIILRGKVVEHHNVADDLMHPQYILYKPQAAGSEEALVVTTIGFLKEAPKVNLHGFCVYHKNRLIMPFWQVINYSSSRGRGVVGVLEANFVEPTHNKQDFEKTVLLQKLENRLKEMTVEYWSCHCVLIGYQVNKKPRLQIPQKVQPAGRQALSPPPGFQAVFPQGNTTSLPRVSTQPVLLEKRKEHPDSVASAALKRKVGNDDFTVPGHIRVEQFIHGSASQSQDIETVKLMEENKKLRAKCLDRKVRSQNLEVKAMNLRSELENYKSEYERLMVELQALDLVKDEHRRNVNT.

The disordered stretch occupies residues 1–77; it reads MSHDRSVNVS…PADDAGVTSS (77 aa). Positions 49 to 62 are enriched in polar residues; that stretch reads SVGQSAGQSSTSVV. The Nuclear localization signal motif lies at 552–559; it reads KRKEHPDS. Residues 614 to 659 are a coiled coil; the sequence is DRKVRSQNLEVKAMNLRSELENYKSEYERLMVELQALDLVKDEHRR.

It belongs to the MORC ATPase protein family. Homodimer and heterodimers with MORC1/CRT1 and MORC2. Interacts directly with SUVH9. Component of an RNA-directed DNA methylation (RdDM) complex that contains at least MORC6, MORC1/CRT1, MORC2, SWI3D and SUVH9. Stimulated by interaction with DMS3. Interacts with IDN2, SWI3B, SWI3C and SWI3D. It depends on Mg(2+) as a cofactor. Mn(2+) is required as a cofactor.

It localises to the nucleus. With respect to regulation, stimulated by DMS3. Involved in RNA-directed DNA methylation (RdDM) as a component of the RdDM machinery and required for gene silencing. Together with SUVH2 and SUVH9, regulates the silencing of some transposable elements (TEs). Exhibits ATPase activity. May also be involved in the regulation of chromatin architecture/condensation to maintain gene silencing. Binds DNA/RNA in a non-specific manner and exhibits endonuclease activity. Probably involved in DNA repair. Positive regulator of defense against the oomycete Hyaloperonospora arabidopsidis (Hpa). This chain is Protein MICRORCHIDIA 6, found in Arabidopsis thaliana (Mouse-ear cress).